A 182-amino-acid chain; its full sequence is Ribosome maturation factor RimM (182 aa).

In terms of domain architecture, PRC barrel spans 103–182 (EDEFYWRELF…RIEVDWDPGF (80 aa)).

Belongs to the RimM family. Binds ribosomal protein uS19.

It localises to the cytoplasm. An accessory protein needed during the final step in the assembly of 30S ribosomal subunit, possibly for assembly of the head region. Essential for efficient processing of 16S rRNA. May be needed both before and after RbfA during the maturation of 16S rRNA. It has affinity for free ribosomal 30S subunits but not for 70S ribosomes. This chain is Ribosome maturation factor RimM, found in Vibrio vulnificus (strain CMCP6).